The following is a 302-amino-acid chain: Phosphoribosylaminoimidazole-succinocarboxamide synthase (302 aa).

Belongs to the SAICAR synthetase family.

The catalysed reaction is 5-amino-1-(5-phospho-D-ribosyl)imidazole-4-carboxylate + L-aspartate + ATP = (2S)-2-[5-amino-1-(5-phospho-beta-D-ribosyl)imidazole-4-carboxamido]succinate + ADP + phosphate + 2 H(+). It participates in purine metabolism; IMP biosynthesis via de novo pathway; 5-amino-1-(5-phospho-D-ribosyl)imidazole-4-carboxamide from 5-amino-1-(5-phospho-D-ribosyl)imidazole-4-carboxylate: step 1/2. This is Phosphoribosylaminoimidazole-succinocarboxamide synthase from Polaromonas sp. (strain JS666 / ATCC BAA-500).